A 153-amino-acid chain; its full sequence is CASP-like protein 5B1 (153 aa).

Residues 1-20 (MRELAGSPGTWSGLSLRVGQ) are Cytoplasmic-facing. Residues 21–41 (LVFAAASVCATASALGFAAYT) traverse the membrane as a helical segment. Position 42 (alanine 42) is a topological domain, extracellular. The chain crosses the membrane as a helical span at residues 43–63 (FCYLIASMGLQALWSLGLACL). At 64-76 (DCYALKFKKDLHS) the chain is on the cytoplasmic side. A helical transmembrane segment spans residues 77 to 97 (AVLLSLFVVGDWVTAILSFAA). At 98 to 128 (SCSAAGVVVLFDRDIYACRNPQLPCGRFELA) the chain is on the extracellular side. A helical membrane pass occupies residues 129 to 149 (IACAFLSWAFSATSALVMFWL). The Cytoplasmic segment spans residues 150–153 (LASL).

This sequence belongs to the Casparian strip membrane proteins (CASP) family. Homodimer and heterodimers.

The protein localises to the cell membrane. The chain is CASP-like protein 5B1 from Oryza sativa subsp. indica (Rice).